A 604-amino-acid chain; its full sequence is Sulfite reductase [NADPH] flavoprotein alpha-component (604 aa).

The Flavodoxin-like domain occupies 65–203 (VTILYGSQTG…AAGQWHADVL (139 aa)). Residues 71–76 (SQTGNG), 118–121 (STHG), and 154–163 (LGDSSYEFFC) each bind FMN. The FAD-binding FR-type domain maps to 236-453 (QNPYSAEVLV…VEPNKHFRLP (218 aa)). FAD-binding positions include Thr324, Leu358, 392-395 (RLYS), 410-412 (TVA), and 425-428 (GGAS). Residues 524 to 525 (SR), 530 to 534 (KIYVQ), and Asp566 each bind NADP(+). Tyr604 lines the FAD pocket.

This sequence belongs to the NADPH-dependent sulphite reductase flavoprotein subunit CysJ family. In the N-terminal section; belongs to the flavodoxin family. It in the C-terminal section; belongs to the flavoprotein pyridine nucleotide cytochrome reductase family. Alpha(8)-beta(8). The alpha component is a flavoprotein, the beta component is a hemoprotein. FAD serves as cofactor. Requires FMN as cofactor.

The catalysed reaction is hydrogen sulfide + 3 NADP(+) + 3 H2O = sulfite + 3 NADPH + 4 H(+). It participates in sulfur metabolism; hydrogen sulfide biosynthesis; hydrogen sulfide from sulfite (NADPH route): step 1/1. Its function is as follows. Component of the sulfite reductase complex that catalyzes the 6-electron reduction of sulfite to sulfide. This is one of several activities required for the biosynthesis of L-cysteine from sulfate. The flavoprotein component catalyzes the electron flow from NADPH -&gt; FAD -&gt; FMN to the hemoprotein component. This is Sulfite reductase [NADPH] flavoprotein alpha-component from Shewanella sp. (strain ANA-3).